Here is a 227-residue protein sequence, read N- to C-terminus: ATP-dependent Clp protease proteolytic subunit (227 aa).

The Nucleophile role is filled by Ser-120. His-145 is an active-site residue.

It belongs to the peptidase S14 family. As to quaternary structure, fourteen ClpP subunits assemble into 2 heptameric rings which stack back to back to give a disk-like structure with a central cavity, resembling the structure of eukaryotic proteasomes.

It is found in the cytoplasm. It catalyses the reaction Hydrolysis of proteins to small peptides in the presence of ATP and magnesium. alpha-casein is the usual test substrate. In the absence of ATP, only oligopeptides shorter than five residues are hydrolyzed (such as succinyl-Leu-Tyr-|-NHMec, and Leu-Tyr-Leu-|-Tyr-Trp, in which cleavage of the -Tyr-|-Leu- and -Tyr-|-Trp bonds also occurs).. Its function is as follows. Cleaves peptides in various proteins in a process that requires ATP hydrolysis. Has a chymotrypsin-like activity. Plays a major role in the degradation of misfolded proteins. This is ATP-dependent Clp protease proteolytic subunit from Rickettsia bellii (strain RML369-C).